The following is a 244-amino-acid chain: uncharacterized protein (244 aa).

The next 6 helical transmembrane spans lie at 22–42 (IMLQ…LLSF), 63–83 (FIFS…WGLT), 110–130 (VILL…EAFA), 140–160 (IMSL…NLTV), 186–206 (GVLF…IFQL), and 213–233 (AVFD…MLVV).

The protein localises to the cell membrane. This is an uncharacterized protein from Haemophilus influenzae (strain ATCC 51907 / DSM 11121 / KW20 / Rd).